We begin with the raw amino-acid sequence, 166 residues long: MASKKLNLSLIEESVNKYDKKEKVQLTDDVHVFIYPYFSPSRLTKMLTEMISDQQKAEDKGIDFSKINTVQWVFFSIVKEFSDLGIPNDIKNKVKWYLKLVDSEFFPMIINSFPKESMKKLKDATKALEKITEDLLTMSHQEINKLILEKVEEIETGSGEVSGENN.

The chain is SPbeta prophage-derived uncharacterized protein YomO (yomO) from Bacillus subtilis (strain 168).